A 510-amino-acid chain; its full sequence is Proline--tRNA ligase (510 aa).

This sequence belongs to the class-II aminoacyl-tRNA synthetase family. ProS type 3 subfamily. Homodimer.

It is found in the cytoplasm. It carries out the reaction tRNA(Pro) + L-proline + ATP = L-prolyl-tRNA(Pro) + AMP + diphosphate. Catalyzes the attachment of proline to tRNA(Pro) in a two-step reaction: proline is first activated by ATP to form Pro-AMP and then transferred to the acceptor end of tRNA(Pro). The sequence is that of Proline--tRNA ligase from Sphingomonas elodea.